Consider the following 90-residue polypeptide: DNA-directed RNA polymerase subunit omega (90 aa).

The protein belongs to the RNA polymerase subunit omega family. As to quaternary structure, the RNAP catalytic core consists of 2 alpha, 1 beta, 1 beta' and 1 omega subunit. When a sigma factor is associated with the core the holoenzyme is formed, which can initiate transcription.

The catalysed reaction is RNA(n) + a ribonucleoside 5'-triphosphate = RNA(n+1) + diphosphate. Promotes RNA polymerase assembly. Latches the N- and C-terminal regions of the beta' subunit thereby facilitating its interaction with the beta and alpha subunits. The polypeptide is DNA-directed RNA polymerase subunit omega (Streptomyces griseus subsp. griseus (strain JCM 4626 / CBS 651.72 / NBRC 13350 / KCC S-0626 / ISP 5235)).